Reading from the N-terminus, the 316-residue chain is uncharacterized protein (316 aa).

Positions 1–34 are disordered; the sequence is MATKRKIGDGYSSSDDNQPKRERSEGGEDQQLVP. Positions 17 to 26 are enriched in basic and acidic residues; sequence NQPKRERSEG.

This is an uncharacterized protein from Lepidoptera (butterflies and moths).